The primary structure comprises 215 residues: Pyridoxine/pyridoxamine 5'-phosphate oxidase (215 aa).

Residues Arg9–Tyr12 and Lys69 each bind substrate. FMN contacts are provided by residues Arg64–Lys69, Phe79–Thr80, Lys86, and Gln108. Substrate contacts are provided by Tyr126, Arg130, and Ser134. FMN contacts are provided by residues Gln143 to Ser144 and Trp188. Residue Arg194–His196 coordinates substrate. An FMN-binding site is contributed by Arg198.

This sequence belongs to the pyridoxamine 5'-phosphate oxidase family. As to quaternary structure, homodimer. The cofactor is FMN.

It catalyses the reaction pyridoxamine 5'-phosphate + O2 + H2O = pyridoxal 5'-phosphate + H2O2 + NH4(+). The catalysed reaction is pyridoxine 5'-phosphate + O2 = pyridoxal 5'-phosphate + H2O2. Its pathway is cofactor metabolism; pyridoxal 5'-phosphate salvage; pyridoxal 5'-phosphate from pyridoxamine 5'-phosphate: step 1/1. The protein operates within cofactor metabolism; pyridoxal 5'-phosphate salvage; pyridoxal 5'-phosphate from pyridoxine 5'-phosphate: step 1/1. In terms of biological role, catalyzes the oxidation of either pyridoxine 5'-phosphate (PNP) or pyridoxamine 5'-phosphate (PMP) into pyridoxal 5'-phosphate (PLP). The protein is Pyridoxine/pyridoxamine 5'-phosphate oxidase of Pseudomonas syringae pv. tomato (strain ATCC BAA-871 / DC3000).